Here is a 360-residue protein sequence, read N- to C-terminus: Peptide chain release factor 1 (360 aa).

Gln235 carries the post-translational modification N5-methylglutamine. The segment at 285–313 (KRQQAEASTRRNLLGSGDRSDRNRTYNFP) is disordered.

This sequence belongs to the prokaryotic/mitochondrial release factor family. Methylated by PrmC. Methylation increases the termination efficiency of RF1.

It is found in the cytoplasm. Functionally, peptide chain release factor 1 directs the termination of translation in response to the peptide chain termination codons UAG and UAA. In Enterobacter sp. (strain 638), this protein is Peptide chain release factor 1.